Consider the following 1460-residue polypeptide: DNA-directed RNA polymerase III subunit RPC1 (1460 aa).

Zn(2+)-binding residues include Cys-67, Cys-70, Cys-77, His-80, Cys-107, Cys-110, and Cys-154. Positions 511, 513, and 515 each coordinate Mg(2+). Positions 858-870 (PPEFLFHAISGRE) are bridging helix.

Belongs to the RNA polymerase beta' chain family. As to quaternary structure, component of the RNA polymerase III (Pol III) complex consisting of 17 subunits.

The protein localises to the nucleus. The enzyme catalyses RNA(n) + a ribonucleoside 5'-triphosphate = RNA(n+1) + diphosphate. Functionally, DNA-dependent RNA polymerase catalyzes the transcription of DNA into RNA using the four ribonucleoside triphosphates as substrates. Largest and catalytic core component of RNA polymerase III which synthesizes small RNAs, such as 5S rRNA and tRNAs. Forms the polymerase active center together with the second largest subunit. A single-stranded DNA template strand of the promoter is positioned within the central active site cleft of Pol III. A bridging helix emanates from RPC1 and crosses the cleft near the catalytic site and is thought to promote translocation of Pol III by acting as a ratchet that moves the RNA-DNA hybrid through the active site by switching from straight to bent conformations at each step of nucleotide addition. The protein is DNA-directed RNA polymerase III subunit RPC1 (RPO31) of Saccharomyces cerevisiae (strain ATCC 204508 / S288c) (Baker's yeast).